The following is a 396-amino-acid chain: Vitamin K-dependent protein Z (396 aa).

The region spanning 1–46 is the Gla domain; the sequence is AGSYLLEELFEGHLEKECWEEICVYEEAREVFEDDETTDEFWRTYM. 4-carboxyglutamate is present on residues glutamate 7, glutamate 8, glutamate 11, glutamate 15, glutamate 17, glutamate 20, glutamate 21, glutamate 26, glutamate 27, glutamate 30, glutamate 33, glutamate 36, and glutamate 40. An intrachain disulfide couples cysteine 18 to cysteine 23. EGF-like domains are found at residues 47–83 and 85–126; these read GGSP…PNCA and AESE…RSCL. Disulfide bonds link cysteine 51-cysteine 62, cysteine 56-cysteine 71, cysteine 73-cysteine 82, cysteine 89-cysteine 101, cysteine 97-cysteine 110, cysteine 112-cysteine 125, and cysteine 169-cysteine 185. Serine 53 carries an O-linked (Glc...) serine glycan. Asparagine 59 carries an N-linked (GlcNAc...) asparagine glycan. Aspartate 64 is modified ((3R)-3-hydroxyaspartate). In terms of domain architecture, Peptidase S1 spans 135 to 357; the sequence is TLGPECCQRP…YALWLRQVTQ (223 aa). N-linked (GlcNAc...) asparagine glycans are attached at residues asparagine 191 and asparagine 289. Residues cysteine 284 and cysteine 298 are joined by a disulfide bond. Positions 356–396 are disordered; sequence TQQPSRASPRGDRGQGRDGEPVPGDRGGRWAPTALPPGPLV. Positions 364-375 are enriched in basic and acidic residues; the sequence is PRGDRGQGRDGE. A glycan (O-linked (GalNAc...) threonine) is linked at threonine 388.

It belongs to the peptidase S1 family. Post-translationally, the iron and 2-oxoglutarate dependent 3-hydroxylation of aspartate and asparagine is (R) stereospecific within EGF domains. Plasma.

Its subcellular location is the secreted. In terms of biological role, inhibits activity of the coagulation protease factor Xa in the presence of SERPINA10, calcium and phospholipids. Appears to assist hemostasis by binding thrombin and promoting its association with phospholipid vesicles. In Bos taurus (Bovine), this protein is Vitamin K-dependent protein Z (PROZ).